The chain runs to 459 residues: F-box protein At1g47340 (459 aa).

In terms of domain architecture, F-box spans 31–76; sequence FMVSVSLPKELILEILKRLPAKSVKRFHCVSKQWASMLSCPHFREL. A disordered region spans residues 434-459; the sequence is AKIEWEEEEEEDEDEDQEKEEEDQWS. Residues 438–459 are compositionally biased toward acidic residues; sequence WEEEEEEDEDEDQEKEEEDQWS.

This is F-box protein At1g47340 from Arabidopsis thaliana (Mouse-ear cress).